A 491-amino-acid chain; its full sequence is Anthranilate synthase component 1 (491 aa).

L-tryptophan contacts are provided by residues serine 49 and 271 to 273; that span reads PYL. Residue 306–307 coordinates chorismate; the sequence is GT. Glutamate 333 provides a ligand contact to Mg(2+). Residues tyrosine 421, arginine 441, 455 to 457, and glycine 457 contribute to the chorismate site; that span reads GAG. Glutamate 470 serves as a coordination point for Mg(2+).

This sequence belongs to the anthranilate synthase component I family. In terms of assembly, heterotetramer consisting of two non-identical subunits: a beta subunit (TrpG) and a large alpha subunit (TrpE). It depends on Mg(2+) as a cofactor.

The enzyme catalyses chorismate + L-glutamine = anthranilate + pyruvate + L-glutamate + H(+). The protein operates within amino-acid biosynthesis; L-tryptophan biosynthesis; L-tryptophan from chorismate: step 1/5. Feedback inhibited by tryptophan. Functionally, part of a heterotetrameric complex that catalyzes the two-step biosynthesis of anthranilate, an intermediate in the biosynthesis of L-tryptophan. In the first step, the glutamine-binding beta subunit (TrpG) of anthranilate synthase (AS) provides the glutamine amidotransferase activity which generates ammonia as a substrate that, along with chorismate, is used in the second step, catalyzed by the large alpha subunit of AS (TrpE) to produce anthranilate. In the absence of TrpG, TrpE can synthesize anthranilate directly from chorismate and high concentrations of ammonia. This Neisseria gonorrhoeae (strain ATCC 700825 / FA 1090) protein is Anthranilate synthase component 1 (trpE).